Reading from the N-terminus, the 156-residue chain is Transcription inhibitor protein Gfh1 (156 aa).

A coiled-coil region spans residues 1-74; the sequence is MAREVKLTKA…LEDILSRAVI (74 aa).

It belongs to the GreA/GreB family. As to quaternary structure, interacts with RNAP.

Inhibits all catalytic activities of RNA polymerase (RNAP) by partially occluding its substrate-binding site and preventing NTP binding. In Thermus thermophilus (strain ATCC BAA-163 / DSM 7039 / HB27), this protein is Transcription inhibitor protein Gfh1 (gfh1).